Reading from the N-terminus, the 71-residue chain is DNA-directed RNA polymerase subunit omega (71 aa).

This sequence belongs to the RNA polymerase subunit omega family. The RNAP catalytic core consists of 2 alpha, 1 beta, 1 beta' and 1 omega subunit. When a sigma factor is associated with the core the holoenzyme is formed, which can initiate transcription.

The catalysed reaction is RNA(n) + a ribonucleoside 5'-triphosphate = RNA(n+1) + diphosphate. Promotes RNA polymerase assembly. Latches the N- and C-terminal regions of the beta' subunit thereby facilitating its interaction with the beta and alpha subunits. This Campylobacter concisus (strain 13826) protein is DNA-directed RNA polymerase subunit omega.